Here is a 342-residue protein sequence, read N- to C-terminus: Ribosomal RNA small subunit methyltransferase C (342 aa).

Belongs to the methyltransferase superfamily. RsmC family. As to quaternary structure, monomer.

It is found in the cytoplasm. It catalyses the reaction guanosine(1207) in 16S rRNA + S-adenosyl-L-methionine = N(2)-methylguanosine(1207) in 16S rRNA + S-adenosyl-L-homocysteine + H(+). Functionally, specifically methylates the guanine in position 1207 of 16S rRNA in the 30S particle. The sequence is that of Ribosomal RNA small subunit methyltransferase C from Shewanella loihica (strain ATCC BAA-1088 / PV-4).